Reading from the N-terminus, the 113-residue chain is Large ribosomal subunit protein bL19 (113 aa).

It belongs to the bacterial ribosomal protein bL19 family.

Functionally, this protein is located at the 30S-50S ribosomal subunit interface and may play a role in the structure and function of the aminoacyl-tRNA binding site. This is Large ribosomal subunit protein bL19 from Corynebacterium diphtheriae (strain ATCC 700971 / NCTC 13129 / Biotype gravis).